The sequence spans 623 residues: MAU2 chromatid cohesion factor homolog (623 aa).

TPR repeat units lie at residues 96-129 (FDTA…SQNN), 451-484 (GGFY…ANAE), and 491-524 (SCSL…ASKI).

Belongs to the SCC4/mau-2 family. As to quaternary structure, interacts with Nipped-B to form the cohesin loading complex.

Its subcellular location is the nucleus. The protein localises to the nucleoplasm. Its function is as follows. Required for association of the cohesin complex with chromatin during interphase. Plays a role in sister chromatid cohesion and normal progression through prometaphase. The sequence is that of MAU2 chromatid cohesion factor homolog from Drosophila grimshawi (Hawaiian fruit fly).